Consider the following 25-residue polypeptide: Neuromedin-U-25 (25 aa).

At asparagine 25 the chain carries Asparagine amide.

This sequence belongs to the NmU family.

The protein localises to the secreted. Its function is as follows. Stimulates uterine smooth muscle contraction and causes selective vasoconstriction. The polypeptide is Neuromedin-U-25 (Rana temporaria (European common frog)).